Here is a 473-residue protein sequence, read N- to C-terminus: ATP synthase subunit beta (473 aa).

Residue glycine 158–threonine 165 coordinates ATP.

The protein belongs to the ATPase alpha/beta chains family. In terms of assembly, F-type ATPases have 2 components, CF(1) - the catalytic core - and CF(0) - the membrane proton channel. CF(1) has five subunits: alpha(3), beta(3), gamma(1), delta(1), epsilon(1). CF(0) has three main subunits: a(1), b(2) and c(9-12). The alpha and beta chains form an alternating ring which encloses part of the gamma chain. CF(1) is attached to CF(0) by a central stalk formed by the gamma and epsilon chains, while a peripheral stalk is formed by the delta and b chains.

The protein resides in the cell membrane. The enzyme catalyses ATP + H2O + 4 H(+)(in) = ADP + phosphate + 5 H(+)(out). In terms of biological role, produces ATP from ADP in the presence of a proton gradient across the membrane. The catalytic sites are hosted primarily by the beta subunits. This chain is ATP synthase subunit beta, found in Geobacillus thermodenitrificans (strain NG80-2).